A 513-amino-acid chain; its full sequence is ATP synthase subunit alpha (513 aa).

An ATP-binding site is contributed by 169-176 (GDRQIGKT).

Belongs to the ATPase alpha/beta chains family. As to quaternary structure, F-type ATPases have 2 components, CF(1) - the catalytic core - and CF(0) - the membrane proton channel. CF(1) has five subunits: alpha(3), beta(3), gamma(1), delta(1), epsilon(1). CF(0) has three main subunits: a(1), b(2) and c(9-12). The alpha and beta chains form an alternating ring which encloses part of the gamma chain. CF(1) is attached to CF(0) by a central stalk formed by the gamma and epsilon chains, while a peripheral stalk is formed by the delta and b chains.

It localises to the cell inner membrane. The catalysed reaction is ATP + H2O + 4 H(+)(in) = ADP + phosphate + 5 H(+)(out). Its function is as follows. Produces ATP from ADP in the presence of a proton gradient across the membrane. The alpha chain is a regulatory subunit. The sequence is that of ATP synthase subunit alpha from Francisella tularensis subsp. tularensis (strain WY96-3418).